A 398-amino-acid polypeptide reads, in one-letter code: Tyrosine--tRNA ligase (398 aa).

The 'HIGH' region signature appears at 42–51; that stretch reads PTAPDLHLGH. The 'KMSKS' region signature appears at 226 to 230; it reads KMSKS. Lys-229 contacts ATP. An S4 RNA-binding domain is found at 341–397; that stretch reads AFLEAAGLVKSRGEAKRLIKEGALSVDGVRCDDANSPLASGEYVIKLGKKRFLRLTV.

Belongs to the class-I aminoacyl-tRNA synthetase family. TyrS type 2 subfamily. As to quaternary structure, homodimer.

Its subcellular location is the cytoplasm. The enzyme catalyses tRNA(Tyr) + L-tyrosine + ATP = L-tyrosyl-tRNA(Tyr) + AMP + diphosphate + H(+). Functionally, catalyzes the attachment of tyrosine to tRNA(Tyr) in a two-step reaction: tyrosine is first activated by ATP to form Tyr-AMP and then transferred to the acceptor end of tRNA(Tyr). The sequence is that of Tyrosine--tRNA ligase from Nitratidesulfovibrio vulgaris (strain ATCC 29579 / DSM 644 / CCUG 34227 / NCIMB 8303 / VKM B-1760 / Hildenborough) (Desulfovibrio vulgaris).